The primary structure comprises 313 residues: Methionyl-tRNA formyltransferase (313 aa).

113–116 (SLLP) contacts (6S)-5,6,7,8-tetrahydrofolate.

The protein belongs to the Fmt family.

The catalysed reaction is L-methionyl-tRNA(fMet) + (6R)-10-formyltetrahydrofolate = N-formyl-L-methionyl-tRNA(fMet) + (6S)-5,6,7,8-tetrahydrofolate + H(+). Functionally, attaches a formyl group to the free amino group of methionyl-tRNA(fMet). The formyl group appears to play a dual role in the initiator identity of N-formylmethionyl-tRNA by promoting its recognition by IF2 and preventing the misappropriation of this tRNA by the elongation apparatus. This Francisella tularensis subsp. novicida (strain U112) protein is Methionyl-tRNA formyltransferase.